Consider the following 290-residue polypeptide: Ankyrin repeat and SOCS box protein 9 (290 aa).

The residue at position 1 (Met-1) is an N-acetylmethionine. The span at 1-11 (MDGEQRGRSDR) shows a compositional bias: basic and acidic residues. A disordered region spans residues 1–20 (MDGEQRGRSDRPGGSPHLPF). ANK repeat units follow at residues 31 to 60 (SDWS…PVNI), 64 to 93 (DHVS…QVNG), 97 to 126 (DWRT…TPHP), 129 to 158 (ELAS…NIDY), 162 to 191 (HLGT…SVNQ), and 194 to 223 (GLDS…NAQA). The 55-residue stretch at 236–290 (PLESPLIQIFLQNEGPQSLRQLCRLRIRKCFGIRQHHKISELLLPEDLKRFLLHL) folds into the SOCS box domain.

The protein belongs to the ankyrin SOCS box (ASB) family. In terms of assembly, substrate-recognition component of the ECS(ASB9) complex, composed of ASB9, CUL5, ELOB, ELOC and RNF7/RBX2.

Its subcellular location is the mitochondrion. It functions in the pathway protein modification; protein ubiquitination. Substrate-recognition component of a cullin-5-RING E3 ubiquitin-protein ligase complex (ECS complex, also named CRL5 complex), which mediates the ubiquitination and subsequent proteasomal degradation of target proteins. The ECS(ASB9) complex catalyzes ubiquitination of creatine kinases CKB and CKMT1A. The chain is Ankyrin repeat and SOCS box protein 9 from Mus musculus (Mouse).